The primary structure comprises 78 residues: Major outer membrane lipoprotein Lpp (78 aa).

An N-terminal signal peptide occupies residues M1–G19. The N-palmitoyl cysteine moiety is linked to residue C20. The S-diacylglycerol cysteine moiety is linked to residue C20. Repeats lie at residues N25–V35 and N39–V49. Positions L28 to A62 form a coiled coil. K78 carries the N6-murein peptidoglycan lysine modification.

This sequence belongs to the Lpp family. As to quaternary structure, homotrimer.

It is found in the cell outer membrane. The protein localises to the secreted. The protein resides in the cell wall. A highly abundant outer membrane lipoprotein that controls the distance between the inner and outer membranes. The only protein known to be covalently linked to the peptidoglycan network (PGN). Also non-covalently binds the PGN. The link between the cell outer membrane and PGN contributes to maintenance of the structural and functional integrity of the cell envelope, and maintains the correct distance between the PGN and the outer membrane. This is Major outer membrane lipoprotein Lpp from Proteus mirabilis.